A 120-amino-acid polypeptide reads, in one-letter code: Small ribosomal subunit protein bS6 (120 aa).

Belongs to the bacterial ribosomal protein bS6 family.

In terms of biological role, binds together with bS18 to 16S ribosomal RNA. In Blochmanniella floridana, this protein is Small ribosomal subunit protein bS6.